The sequence spans 202 residues: MKTVKISAYYAILLALIALICTALSTGIYLLTKSKIEDEINKQRQALLLEVVPQAYFDNPLSENCQRPNSEKLRAQRIDRLCIATKNNQKTAYAFETVAPDGYAGRIRLLVGITPTGTILGVRVLEHQETPGLGDKIETRISDWILSFSQQQLRSDNLADWAVKKDGGKFDQFAGATITPRAVVNQVKQSALSLLDELNQEN.

A helical membrane pass occupies residues 11–31 (AILLALIALICTALSTGIYLL). At threonine 177 the chain carries FMN phosphoryl threonine.

The protein belongs to the RnfG family. The complex is composed of six subunits: RnfA, RnfB, RnfC, RnfD, RnfE and RnfG. Requires FMN as cofactor.

Its subcellular location is the cell inner membrane. In terms of biological role, part of a membrane-bound complex that couples electron transfer with translocation of ions across the membrane. This chain is Ion-translocating oxidoreductase complex subunit G, found in Pasteurella multocida (strain Pm70).